The primary structure comprises 314 residues: Dihydroorotate dehydrogenase (fumarate) (314 aa).

Substrate contacts are provided by residues Lys46, Asn70 to Leu74, and Asn130. Lys46 is covalently cross-linked (Glycyl lysine isopeptide (Lys-Gly) (interchain with G-Cter in ubiquitin)). FMN is bound at residue Lys46–Ser47. Asn130 serves as a coordination point for FMN. Residue Cys133 is the Nucleophile of the active site. Lys167 and Ile195 together coordinate FMN. Asn196–Ser197 lines the substrate pocket. Residues Gly224, Gly252–Gly253, and Gly274–Thr275 each bind FMN.

The protein belongs to the dihydroorotate dehydrogenase family. Type 1 subfamily. As to quaternary structure, homodimer. It depends on FMN as a cofactor.

The protein localises to the cytoplasm. It catalyses the reaction (S)-dihydroorotate + fumarate = orotate + succinate. Its pathway is pyrimidine metabolism; UMP biosynthesis via de novo pathway. Its activity is regulated as follows. The activity is independent of the presence of oxygen. Catalyzes the conversion of dihydroorotate to orotate with fumarate as the electron acceptor. Molecular oxygen can replace fumarate in vitro. Does not use oxaloacetate or NAD or NADP as electron acceptors. This is Dihydroorotate dehydrogenase (fumarate) (URA1) from Saccharomyces cerevisiae (strain ATCC 204508 / S288c) (Baker's yeast).